The sequence spans 1416 residues: MKSLKSRLRRQDVPGPASSGAAAASAHAADWNKYDDRLMKAAERGDVEKVTSILAKKGVNPGKLDVEGRSVFHVVTSKGNLECLNAILIHGVDITTSDTAGRNALHLAAKYGHALCLQKLLQYNCPTEHADLQGRTALHDAAMADCPSSIQLLCDHGASVNAKDVDGRTPLVLATQMSRPTICQLLIDRGADVNSRDKQNRTALMLGCEYGCRDAVEVLIKNGADISLLDALGHDSSYYARIGDNLDILTLLKTASENTNKGRELWKKGPSLQQRNLTHMQDEVNVKSHQREHQNIQDLEIENEDLKERLRKIQQEQRILLDKVNGLQLQLNEEVMVADDLESEREKLKSLLAAKEKQHEESLRTIEALKNRFKYFESDHLGSGSHFSNRKEDMLLKQGQMYMADSQCTSPGIPAHMQSRSMLRPLELSLPSQTSYSENEILKKELEAMRTFCESAKQDRLKLQNELAHKVAECKALALECERVKEDSDEQIKQLEDALKDVQKRMYESEGKVKQMQTHFLALKEHLTSEAASGNHRLTEELKDQLKDLKVKYEGASAEVGKLRNQIKQNEMIVEEFKRDEGKLIEENKRLQKELSMCEMEREKKGRKVTEMEGQAKELSAKLALSIPAEKFENMKSSLSNEVNEKAKKLVEMEREHEKSLSEIRQLKRELENVKAKLAQHVKPEEHEQVKSRLEQKSGELGKKITELTLKNQTLQKEIEKVYLDNKLLKEQAHNLTIEMKNHYVPLKVSEDMKKSHDAIIDDLNRKLLDVTQKYTEKKLEMEKLLLENDSLSKDVSRLETVFVPPEKHEKEIIALKSNIVELKKQLSELKKKCGEDQEKIHALTSENTNLKKMMSNQYVPVKTHEEVKMTLNDTLAKTNRELLDVKKKFEDINQEFVKIKDKNEILKRNLENTQNQIKAEYISLAEHEAKMSSLSQSMRKVQDSNAEILANYRKGQEEIVTLHAEIKAQKKELDTIQECIKVKYAPIVSFEECERKFKATEKELKDQLSEQTQKYSVSEEEVKKNKQENDKLKKEIFTLQKDLRDKTVLIEKSHEMERALSRKTDELNKQLKDLSQKYTEVKNVKEKLVEENAKQTSEILAVQNLLQKQHVPLEQVEALKKSLNGTIENLKEELKSMQRCYEKEQQTVTKLHQLLENQKNSSVPLAEHLQIKEAFEKEVGIIKASLREKEEESQNKMEEVSKLQSEVQNTKQALKKLETREVVDLSKYKATKSDLETQISSLNEKLANLNRKYEEVCEEVLHAKKKEISAKDEKELLHFSIEQEIKDQKERCDKSLTTITELQRRIQESAKQIEAKDNKITELLNDVERLKQALNGLSQLTYTSGNPTKRQSQLIDTLQHQVKSLEQQLADADRQHQEVIAIYRTHLLSAAQGHMDEDVQEALLQIIQMRQGLVC.

Methionine 1 is modified (N-acetylmethionine). The disordered stretch occupies residues 1 to 24 (MKSLKSRLRRQDVPGPASSGAAAA). ANK repeat units lie at residues 38–66 (LMKA…KLDV), 67–96 (EGRS…DITT), 100–129 (AGRN…PTEH), 133–162 (QGRT…SVNA), 166–195 (DGRT…DVNS), and 199–228 (QNRT…DISL). Coiled coils occupy residues 286-374 (VKSH…NRFK) and 438-1386 (ENEI…IYRT). A Glycyl lysine isopeptide (Lys-Gly) (interchain with G-Cter in SUMO2) cross-link involves residue lysine 1035.

Component of the apoptosome complex, composed of APAF1, pro-caspase-9 and UACA. In the complex, it probably interacts directly with APAF1. Interacts with LGALS3, ARF6 and ACTB. Interacts with RAB39A. As to expression, highly expressed in skeletal muscle, heart, kidney and pancreas. Expressed in choroid, retina and epidermal melanocytes. Expressed in eye muscles and thyroid follicular cells.

It localises to the nucleus. It is found in the cytoplasm. Its subcellular location is the cytoskeleton. In terms of biological role, regulates APAF1 expression and plays an important role in the regulation of stress-induced apoptosis. Promotes apoptosis by regulating three pathways, apoptosome up-regulation, LGALS3/galectin-3 down-regulation and NF-kappa-B inactivation. Regulates the redistribution of APAF1 into the nucleus after proapoptotic stress. Down-regulates the expression of LGALS3 by inhibiting NFKB1. Modulates isoactin dynamics to regulate the morphological alterations required for cell growth and motility. Interaction with ARF6 may modulate cell shape and motility after injury. May be involved in multiple neurite formation. In Homo sapiens (Human), this protein is Uveal autoantigen with coiled-coil domains and ankyrin repeats (UACA).